Reading from the N-terminus, the 157-residue chain is Thioredoxin-T (157 aa).

Positions 2 to 107 constitute a Thioredoxin domain; sequence VYPVRNKDDL…LAKLMEKHAG (106 aa). Cys32 and Cys35 are oxidised to a cystine. Residues 132–157 are disordered; it reads ESSESDNDNNNVNEVSAHDENAVLEH. The segment covering 147 to 157 has biased composition (basic and acidic residues); it reads SAHDENAVLEH.

It belongs to the thioredoxin family. Testis specific. Not expressed in the embryo. Becomes progressively more strongly expressed during larval and pupal development. In testis, it is strongly expressed in young spermatocytes, and postmeiotic spermatid stages, then expression decreases at the nuclear elongation stage. Strongly expressed in the waste bag, in which material no longer needed for the mature sperm is eliminated. Not expressed in the stem cells and spermatogonial cells.

It is found in the nucleus. The protein localises to the chromosome. Functionally, probably participates in various redox reactions through the reversible oxidation of its active center dithiol to a disulfide and catalyzes dithiol-disulfide exchange reactions. Its tissue specificity suggests a regulatory role in the germline. The polypeptide is Thioredoxin-T (TrxT) (Drosophila melanogaster (Fruit fly)).